A 975-amino-acid chain; its full sequence is Glycine dehydrogenase (decarboxylating) (975 aa).

Position 723 is an N6-(pyridoxal phosphate)lysine (K723).

Belongs to the GcvP family. The glycine cleavage system is composed of four proteins: P, T, L and H. The cofactor is pyridoxal 5'-phosphate.

The catalysed reaction is N(6)-[(R)-lipoyl]-L-lysyl-[glycine-cleavage complex H protein] + glycine + H(+) = N(6)-[(R)-S(8)-aminomethyldihydrolipoyl]-L-lysyl-[glycine-cleavage complex H protein] + CO2. Functionally, the glycine cleavage system catalyzes the degradation of glycine. The P protein binds the alpha-amino group of glycine through its pyridoxal phosphate cofactor; CO(2) is released and the remaining methylamine moiety is then transferred to the lipoamide cofactor of the H protein. The protein is Glycine dehydrogenase (decarboxylating) of Burkholderia multivorans (strain ATCC 17616 / 249).